The primary structure comprises 465 residues: Ribosomal oxygenase 2 (465 aa).

Positions 139 to 271 (QPQRFKDELW…NSWGDYLLDS (133 aa)) constitute a JmjC domain. Residues His-179, Asp-181, and His-240 each contribute to the Fe cation site. Ser-309 is modified (phosphoserine).

It belongs to the ROX family. MINA53 subfamily. Fe(2+) is required as a cofactor.

It is found in the nucleus. The protein resides in the nucleolus. The catalysed reaction is L-histidyl-[ribosomal protein uL15] + 2-oxoglutarate + O2 = (3S)-3-hydroxy-L-histidyl-[ribosomal protein uL15] + succinate + CO2. It carries out the reaction L-histidyl-[protein] + 2-oxoglutarate + O2 = (3S)-3-hydroxy-L-histidyl-[protein] + succinate + CO2. Its function is as follows. Oxygenase that can act as both a histone lysine demethylase and a ribosomal histidine hydroxylase. Is involved in the demethylation of trimethylated 'Lys-9' on histone H3 (H3K9me3), leading to an increase in ribosomal RNA expression. Also catalyzes the hydroxylation of 60S ribosomal protein L27a on 'His-39'. May play an important role in cell growth and survival. May be involved in ribosome biogenesis, most likely during the assembly process of pre-ribosomal particles. This chain is Ribosomal oxygenase 2, found in Rattus norvegicus (Rat).